We begin with the raw amino-acid sequence, 182 residues long: Large ribosomal subunit protein uL6 (182 aa).

It belongs to the universal ribosomal protein uL6 family. Part of the 50S ribosomal subunit.

In terms of biological role, this protein binds to the 23S rRNA, and is important in its secondary structure. It is located near the subunit interface in the base of the L7/L12 stalk, and near the tRNA binding site of the peptidyltransferase center. The protein is Large ribosomal subunit protein uL6 of Karelsulcia muelleri (strain GWSS) (Sulcia muelleri).